The sequence spans 554 residues: Probable efflux pump gsfJ (554 aa).

Helical transmembrane passes span 54 to 74, 93 to 115, 120 to 140, 152 to 172, 181 to 201, 206 to 226, 248 to 268, 279 to 299, 321 to 341, 349 to 369, 379 to 399, 410 to 430, 447 to 467, and 518 to 538; these read LAAV…DNTI, SWYG…GKFY, IKVW…ICAV, AIAG…IGFA, LLGF…LIGG, KCFY…FLLF, LVGA…LQYG, VIGL…WEIY, IYMF…PIYF, PIGS…AAIV, IVPL…GLFY, WVGY…IAMS, IVNF…QCAF, and VFAI…FGSW.

It belongs to the major facilitator superfamily.

The protein resides in the membrane. Probable efflux pump; part of the gene cluster that mediates the biosynthesis of griseofulvin. This chain is Probable efflux pump gsfJ, found in Penicillium aethiopicum.